The chain runs to 494 residues: MIDMRSIQKSFGANIVLNGVDFEVLPGEVHALMGENGAGKSTLIKVLTGIYERDGGTIVVNGREVHYRHPKEAERDGIVVIHQELNVIPTLTVAENIFLGREPKIGRTGVIRYKEMEQQAASYLRRLGMDLDPRELAGRLSVGKQQMIEIARAISTNAKCLIMDEPTAALTEREIQALFSVIPTLKQQGVAVVYISHRMEEIFTICDRISVLRDGQFIGTKRVKETNFDEIVQMMVGRQIGERFPKRRVTIGEERLRVERLTKKGLFENVSFSVRAGEVLGVAGLMGSGRTEIMEAIFGARPFDEGDIYIDGRPVRIRSPRQAVEHGIAMITEDRKQKGLILEMSVHENLTLPKLEQLATAGFIQSSKERDVVLTYIHLLNIKASSPDLPVKALSGGNQQKVVFGKWLAMNPRILILDEPTRGVDVGAKKEIYEVINELAAQGAAIIMISSELPEVLGMSDRVMVVHEGKVQAILENDGLDQETIMRAATGGNR.

ABC transporter domains lie at 2–239 (IDMR…VGRQ) and 251–493 (IGEE…TGGN). 34 to 41 (GENGAGKS) lines the ATP pocket.

This sequence belongs to the ABC transporter superfamily. Ribose importer (TC 3.A.1.2.1) family. In terms of assembly, the complex is composed of an ATP-binding protein (RbsA), two transmembrane proteins (RbsC) and a solute-binding protein (RbsB).

It localises to the cell membrane. It catalyses the reaction D-ribose(out) + ATP + H2O = D-ribose(in) + ADP + phosphate + H(+). Its function is as follows. Part of the ABC transporter complex RbsABC involved in ribose import. Responsible for energy coupling to the transport system. This is Ribose import ATP-binding protein RbsA from Geobacillus kaustophilus (strain HTA426).